The sequence spans 1424 residues: Putative disease resistance protein At3g14460 (1424 aa).

Residues 152–454 enclose the NB-ARC domain; it reads WRQASRSRPD…AIDLLYQPRS (303 aa). Residue 200-207 coordinates ATP; sequence GMPGVGKT. 7 LRR repeats span residues 498-523, 552-571, 572-595, 597-618, 620-641, 642-665, and 806-830; these read VSGD…HFSF, PTSL…LLNA, LSGL…LKGL, LLRY…VCTL, NLQT…SIAE, LINL…IKKL, and LPSL…FFFG. 2 disordered regions span residues 911 to 977 and 1050 to 1070; these read FRRS…PKDR and IKSS…QYDD. Composition is skewed to polar residues over residues 912 to 927 and 934 to 972; these read RRSL…SIPS and SSPT…SLSS. LRR repeat units follow at residues 1090-1114, 1118-1139, 1238-1262, 1264-1286, and 1310-1336; these read PQNL…LTES, LHEL…HPPT, TPKL…LFGL, SLLS…GFPS, and LENL…LLPK.

Belongs to the disease resistance NB-LRR family.

Potential disease resistance protein. The chain is Putative disease resistance protein At3g14460 from Arabidopsis thaliana (Mouse-ear cress).